The chain runs to 139 residues: uncharacterized protein (139 aa).

The VOC domain maps to 9 to 133; sequence QAAQIRIARP…DGWRIVFMNS (125 aa).

This is an uncharacterized protein from Bacillus subtilis (strain 168).